The following is a 406-amino-acid chain: Collagen and calcium-binding EGF domain-containing protein 1 (406 aa).

The N-terminal stretch at 1–34 (MVPPPPSRGGAARGQLGRSLGPLLLLLALGHTWT) is a signal peptide. The EGF-like; calcium-binding domain maps to 134-175 (DIDECASSNGTLCAHICINTLGSYRCECREGYIREDDGKTCT). Cystine bridges form between cysteine 138/cysteine 150, cysteine 146/cysteine 159, and cysteine 161/cysteine 174. Asparagine 142 is a glycosylation site (N-linked (GlcNAc...) asparagine). N-linked (GlcNAc...) asparagine glycosylation is present at asparagine 182. Disordered stretches follow at residues 244–335 (YLPG…PGSF) and 360–406 (RTHS…DFYP). Collagen-like domains lie at 245 to 290 (LPGP…PMGP) and 300 to 333 (GRRGPVGPPGAPGRDGSKGERGAPGPRGSPGPPG). The segment covering 270–279 (PGMPGPPGQP) has biased composition (pro residues). The span at 281–292 (PRGSMGPMGPSP) shows a compositional bias: low complexity. Residue serine 385 is glycosylated (O-linked (Xyl...) (chondroitin sulfate) serine). Residues 386 to 406 (GDDHPRRTETRDLRAPRDFYP) show a composition bias toward basic and acidic residues.

This sequence belongs to the CCBE1 family. In terms of tissue distribution, detected in fibroblasts and urine (at protein level). Not expressed in blood or lymphatic endothelial cells.

Its subcellular location is the secreted. Required for lymphangioblast budding and angiogenic sprouting from venous endothelium during embryogenesis. This chain is Collagen and calcium-binding EGF domain-containing protein 1 (CCBE1), found in Homo sapiens (Human).